The primary structure comprises 157 residues: Mannose-specific lectin (157 aa).

Positions methionine 1 to proline 19 form a signal peptide, or 23; in 70% of the molecules. The 109-residue stretch at aspartate 24 to glycine 132 folds into the Bulb-type lectin domain. Alpha-D-mannopyranose is bound by residues glutamine 49, aspartate 51, asparagine 53, tyrosine 57, aspartate 60, lysine 61, tryptophan 64, alanine 65, asparagine 67, glutamine 80, aspartate 82, asparagine 84, tyrosine 88, isoleucine 95, tryptophan 96, asparagine 99, asparagine 106, glutamine 112, aspartate 114, asparagine 116, tyrosine 120, and tryptophan 125. Cysteine 52 and cysteine 75 are oxidised to a cystine. Positions threonine 129–lysine 157 are cleaved as a propeptide — removed in mature form.

In terms of assembly, homotetramer.

It localises to the secreted. Mannose-specific lectin which binds alpha-D-linked mannose. Displays a high affinity for alpha-(1-3)-mannose oligomers. Displays antiviral activity and therefore may contribute to defense against infections. The protein is Mannose-specific lectin of Galanthus nivalis (Common snowdrop).